The sequence spans 106 residues: ATP-dependent Clp protease adapter protein ClpS (106 aa).

Belongs to the ClpS family. As to quaternary structure, binds to the N-terminal domain of the chaperone ClpA.

In terms of biological role, involved in the modulation of the specificity of the ClpAP-mediated ATP-dependent protein degradation. The chain is ATP-dependent Clp protease adapter protein ClpS from Yersinia enterocolitica serotype O:8 / biotype 1B (strain NCTC 13174 / 8081).